Here is a 388-residue protein sequence, read N- to C-terminus: Pepsin A-5 (388 aa).

The N-terminal stretch at 1-15 (MKWLLLLGLVALSEC) is a signal peptide. A propeptide spans 16-62 (IMYKVPLIRKKSLRRTLSERGLLKDFLKKHNLNPARKYFPQWEAPTL) (activation peptide). Positions 76–385 (YFGTIGIGTP…DRANNQVGLA (310 aa)) constitute a Peptidase A1 domain. Aspartate 94 is an active-site residue. Cysteine 107 and cysteine 112 are oxidised to a cystine. The residue at position 130 (serine 130) is a Phosphoserine. Cysteines 268 and 272 form a disulfide. Aspartate 277 is an active-site residue. Residues cysteine 311 and cysteine 344 are joined by a disulfide bond.

Belongs to the peptidase A1 family.

The protein resides in the secreted. The catalysed reaction is Preferential cleavage: hydrophobic, preferably aromatic, residues in P1 and P1' positions. Cleaves 1-Phe-|-Val-2, 4-Gln-|-His-5, 13-Glu-|-Ala-14, 14-Ala-|-Leu-15, 15-Leu-|-Tyr-16, 16-Tyr-|-Leu-17, 23-Gly-|-Phe-24, 24-Phe-|-Phe-25 and 25-Phe-|-Tyr-26 bonds in the B chain of insulin.. Its function is as follows. Shows particularly broad specificity; although bonds involving phenylalanine and leucine are preferred, many others are also cleaved to some extent. The sequence is that of Pepsin A-5 (PGA5) from Homo sapiens (Human).